The sequence spans 117 residues: Large ribosomal subunit protein bL20 (117 aa).

It belongs to the bacterial ribosomal protein bL20 family.

Functionally, binds directly to 23S ribosomal RNA and is necessary for the in vitro assembly process of the 50S ribosomal subunit. It is not involved in the protein synthesizing functions of that subunit. The protein is Large ribosomal subunit protein bL20 of Aliivibrio salmonicida (strain LFI1238) (Vibrio salmonicida (strain LFI1238)).